Reading from the N-terminus, the 244-residue chain is tRNA (guanine-N(1)-)-methyltransferase (244 aa).

S-adenosyl-L-methionine contacts are provided by residues G113 and 133–138; that span reads IGDYVL.

Belongs to the RNA methyltransferase TrmD family. Homodimer.

The protein resides in the cytoplasm. The enzyme catalyses guanosine(37) in tRNA + S-adenosyl-L-methionine = N(1)-methylguanosine(37) in tRNA + S-adenosyl-L-homocysteine + H(+). Its function is as follows. Specifically methylates guanosine-37 in various tRNAs. The chain is tRNA (guanine-N(1)-)-methyltransferase from Bacillus anthracis (strain A0248).